Reading from the N-terminus, the 123-residue chain is Maintenance of telomere capping protein 3, mitochondrial (123 aa).

The transit peptide at 1–37 (MMGRNGIRLALKRSFSTYQPPVVEITNITKLWPTLRP) directs the protein to the mitochondrion.

Its subcellular location is the mitochondrion. Functionally, may be involved in telomere capping. This chain is Maintenance of telomere capping protein 3, mitochondrial (MTC3), found in Saccharomyces cerevisiae (strain ATCC 204508 / S288c) (Baker's yeast).